A 346-amino-acid chain; its full sequence is Fe(3+) ions import ATP-binding protein FbpC 3 (346 aa).

Residues Leu-5 to Ile-235 form the ABC transporter domain. Gly-37–Thr-44 contacts ATP.

This sequence belongs to the ABC transporter superfamily. Fe(3+) ion importer (TC 3.A.1.10) family. In terms of assembly, the complex is composed of two ATP-binding proteins (FbpC), two transmembrane proteins (FbpB) and a solute-binding protein (FbpA).

Its subcellular location is the cell membrane. The catalysed reaction is Fe(3+)(out) + ATP + H2O = Fe(3+)(in) + ADP + phosphate + H(+). Functionally, part of the ABC transporter complex FbpABC involved in Fe(3+) ions import. Responsible for energy coupling to the transport system. This chain is Fe(3+) ions import ATP-binding protein FbpC 3, found in Rhodococcus jostii (strain RHA1).